Consider the following 603-residue polypeptide: Serine/threonine-protein kinase PLK1 (603 aa).

Residue Lys19 forms a Glycyl lysine isopeptide (Lys-Gly) (interchain with G-Cter in ubiquitin) linkage. The region spanning 53–305 is the Protein kinase domain; that stretch reads YVRGRFLGKG…IHELLNDEFF (253 aa). ATP contacts are provided by residues 59–67 and Lys82; that span reads LGKGGFAKC. Phosphoserine is present on Ser103. Glu131 lines the ATP pocket. Ser137 carries the post-translational modification Phosphoserine. Asp176 functions as the Proton acceptor in the catalytic mechanism. ATP is bound by residues 178-181 and Asp194; that span reads KLGN. The interval 194–221 is activation loop; it reads DFGLATKVEYEGERKKTLCGTPNYIAPE. Thr210 is modified (phosphothreonine; by AURKA). Residue Thr214 is modified to Phosphothreonine. Residues Ser269 and Ser335 each carry the phosphoserine; by autocatalysis modification. A D-box that targets the protein for proteasomal degradation in anaphase motif is present at residues 337-340; that stretch reads RKPL. Lys338 participates in a covalent cross-link: Glycyl lysine isopeptide (Lys-Gly) (interchain with G-Cter in SUMO2). Phosphoserine occurs at positions 375 and 450. Residues 410–488 form the POLO box 1 domain; the sequence is WVSKWVDYSD…LNYFRNYMSE (79 aa). Lys492 is covalently cross-linked (Glycyl lysine isopeptide (Lys-Gly) (interchain with G-Cter in ubiquitin)). The linker stretch occupies residues 493–507; it reads AGANITPREGDELAR. Residue Thr498 is modified to Phosphothreonine. The POLO box 2 domain occupies 510–592; it reads YLRTWFRTRS…ARTMVDKLLS (83 aa). An important for interaction with phosphorylated proteins region spans residues 538–540; that stretch reads HTK.

This sequence belongs to the protein kinase superfamily. Ser/Thr protein kinase family. CDC5/Polo subfamily. As to quaternary structure, interacts with CEP170 and EVI5. Interacts and phosphorylates ERCC6L. Interacts with FAM29A. Interacts with SLX4/BTBD12 and TTDN1. Interacts with BUB1B. Interacts (via POLO-box domain) with the phosphorylated form of BUB1, CENPU and CDC25C. Interacts with isoform 3 of SGO1. Interacts with BORA, KIF2A and AURKA. Interacts with TOPORS and CYLD. Interacts with ECT2; the interaction is stimulated upon phosphorylation of ECT2 on 'Thr-444'. Interacts with PRC1. Interacts with KIF20A/MKLP2 (when phosphorylated), leading to the recruitment at the central spindle. Interacts (via POLO box domains) with PPP1R12A/MYPT1 (when previously phosphorylated by CDK1). Part of an astrin (SPAG5)-kinastrin (SKAP) complex containing KNSTRN, SPAG5, PLK1, DYNLL1 and SGO2A. Interacts with BIRC6/bruce. Interacts with CDK1-phosphorylated DCTN6 during mitotic prometaphase; the interaction facilitates recruitment to kinetochores. Interacts with CDK1-phosphorylated FRY; this interaction occurs in mitotic cells, but not in interphase cells. FRY interaction facilitates AURKA-mediated PLK1 phosphorylation. Interacts with CEP68; the interaction phosphorylates CEP68. Interacts (via POLO-box domain) with DCTN1. Interacts with CEP20 in later G1, S, G2 and M phases of the cell cycle; this interaction recruits PLK1 to centrosomes, a step required for S phase progression. Interacts with HSF1; this interaction increases upon heat shock but does not modulate neither HSF1 homotrimerization nor DNA-binding activities. Interacts with HNRNPU; this interaction induces phosphorylation of HNRNPU in mitosis. Interacts (via its N-terminus) with RIOK2. Interacts with KLHL22. Interacts (via POLO box domains) with NEDD9/HEF1 (via C-terminus). Interacts (via RVxF motif) with FIRRM; regulates PLK1 kinase activity. Interacts with SKA3; the interaction promotes the stability of PLK1. Interacts with the MTMR3:MTMR4 heterooligomer; brings CEP55 and PLK1 together during early mitosis, regulating the phosphorylation of CEP55 by PLK1 and its recruitment to the midbody where it can mediate cell abscission. In terms of processing, catalytic activity is enhanced by phosphorylation of Thr-210. Phosphorylation at Thr-210 is first detected on centrosomes in the G2 phase of the cell cycle, peaks in prometaphase and gradually disappears from centrosomes during anaphase. Dephosphorylation at Thr-210 at centrosomes is probably mediated by protein phosphatase 1C (PP1C), via interaction with PPP1R12A/MYPT1. Autophosphorylation and phosphorylation of Ser-137 may not be significant for the activation of PLK1 during mitosis, but may enhance catalytic activity during recovery after DNA damage checkpoint. Phosphorylated in vitro by STK10. Ubiquitinated by the anaphase promoting complex/cyclosome (APC/C) in anaphase and following DNA damage, leading to its degradation by the proteasome. Ubiquitination is mediated via its interaction with FZR1/CDH1. Ubiquitination and subsequent degradation prevents entry into mitosis and is essential to maintain an efficient G2 DNA damage checkpoint. Monoubiquitination at Lys-492 by the BCR(KLHL22) ubiquitin ligase complex does not lead to degradation: it promotes PLK1 dissociation from phosphoreceptor proteins and subsequent removal from kinetochores, allowing silencing of the spindle assembly checkpoint (SAC) and chromosome segregation. In terms of tissue distribution, newborn and adult spleen, fetal and newborn kidney, liver, brain, thymus and adult bone marrow, thymus, ovary and testes.

The protein resides in the nucleus. It is found in the chromosome. It localises to the centromere. Its subcellular location is the kinetochore. The protein localises to the cytoplasm. The protein resides in the cytoskeleton. It is found in the microtubule organizing center. It localises to the centrosome. Its subcellular location is the spindle. The protein localises to the midbody. The enzyme catalyses L-seryl-[protein] + ATP = O-phospho-L-seryl-[protein] + ADP + H(+). It catalyses the reaction L-threonyl-[protein] + ATP = O-phospho-L-threonyl-[protein] + ADP + H(+). Activated by phosphorylation of Thr-210 by AURKA; phosphorylation by AURKA is enhanced by BORA. Once activated, activity is stimulated by binding target proteins. Binding of target proteins has no effect on the non-activated kinase. Several inhibitors targeting PLKs are currently in development and are under investigation in a growing number of clinical trials, such as BI 2536, an ATP-competitive PLK1 inhibitor or BI 6727, a dihydropteridinone that specifically inhibits the catalytic activity of PLK1. Functionally, serine/threonine-protein kinase that performs several important functions throughout M phase of the cell cycle, including the regulation of centrosome maturation and spindle assembly, the removal of cohesins from chromosome arms, the inactivation of anaphase-promoting complex/cyclosome (APC/C) inhibitors, and the regulation of mitotic exit and cytokinesis. Polo-like kinase proteins act by binding and phosphorylating proteins that are already phosphorylated on a specific motif recognized by the POLO box domains. Phosphorylates BORA, BUB1B/BUBR1, CCNB1, CDC25C, CEP55, ECT2, ERCC6L, FBXO5/EMI1, FOXM1, KIF20A/MKLP2, CENPU, NEDD1, NINL, NPM1, NUDC, PKMYT1/MYT1, KIZ, MRE11, PPP1R12A/MYPT1, POLQ, PRC1, RACGAP1/CYK4, RAD51, RHNO1, SGO1, STAG2/SA2, TEX14, TOPORS, p73/TP73, TPT1, WEE1 and HNRNPU. Plays a key role in centrosome functions and the assembly of bipolar spindles by phosphorylating KIZ, NEDD1 and NINL. NEDD1 phosphorylation promotes subsequent targeting of the gamma-tubulin ring complex (gTuRC) to the centrosome, an important step for spindle formation. Phosphorylation of NINL component of the centrosome leads to NINL dissociation from other centrosomal proteins. Involved in mitosis exit and cytokinesis by phosphorylating CEP55, ECT2, KIF20A/MKLP2, CENPU, PRC1 and RACGAP1. Recruited at the central spindle by phosphorylating and docking PRC1 and KIF20A/MKLP2; creates its own docking sites on PRC1 and KIF20A/MKLP2 by mediating phosphorylation of sites subsequently recognized by the POLO box domains. Phosphorylates RACGAP1, thereby creating a docking site for the Rho GTP exchange factor ECT2 that is essential for the cleavage furrow formation. Promotes the central spindle recruitment of ECT2. Plays a central role in G2/M transition of mitotic cell cycle by phosphorylating CCNB1, CDC25C, FOXM1, CENPU, PKMYT1/MYT1, PPP1R12A/MYPT1 and WEE1. Part of a regulatory circuit that promotes the activation of CDK1 by phosphorylating the positive regulator CDC25C and inhibiting the negative regulators WEE1 and PKMYT1/MYT1. Also acts by mediating phosphorylation of cyclin-B1 (CCNB1) on centrosomes in prophase. Phosphorylates FOXM1, a key mitotic transcription regulator, leading to enhance FOXM1 transcriptional activity. Involved in kinetochore functions and sister chromatid cohesion by phosphorylating BUB1B/BUBR1, FBXO5/EMI1 and STAG2/SA2. PLK1 is high on non-attached kinetochores suggesting a role of PLK1 in kinetochore attachment or in spindle assembly checkpoint (SAC) regulation. Required for kinetochore localization of BUB1B. Regulates the dissociation of cohesin from chromosomes by phosphorylating cohesin subunits such as STAG2/SA2. Phosphorylates SGO1: required for spindle pole localization of isoform 3 of SGO1 and plays a role in regulating its centriole cohesion function. Mediates phosphorylation of FBXO5/EMI1, a negative regulator of the APC/C complex during prophase, leading to FBXO5/EMI1 ubiquitination and degradation by the proteasome. Acts as a negative regulator of p53 family members: phosphorylates TOPORS, leading to inhibit the sumoylation of p53/TP53 and simultaneously enhance the ubiquitination and subsequent degradation of p53/TP53. Phosphorylates the transactivation domain of the transcription factor p73/TP73, leading to inhibit p73/TP73-mediated transcriptional activation and pro-apoptotic functions. Phosphorylates BORA, and thereby promotes the degradation of BORA. Contributes to the regulation of AURKA function. Also required for recovery after DNA damage checkpoint and entry into mitosis. Phosphorylates MISP, leading to stabilization of cortical and astral microtubule attachments required for proper spindle positioning. Together with MEIKIN, acts as a regulator of kinetochore function during meiosis I: required both for mono-orientation of kinetochores on sister chromosomes and protection of centromeric cohesin from separase-mediated cleavage. Phosphorylates CEP68 and is required for its degradation. Regulates nuclear envelope breakdown during prophase by phosphorylating DCTN1 resulting in its localization in the nuclear envelope. Phosphorylates the heat shock transcription factor HSF1, promoting HSF1 nuclear translocation upon heat shock. Phosphorylates HSF1 also in the early mitotic period; this phosphorylation regulates HSF1 localization to the spindle pole, the recruitment of the SCF(BTRC) ubiquitin ligase complex induicing HSF1 degradation, and hence mitotic progression. Regulates mitotic progression by phosphorylating RIOK2. Through the phosphorylation of DZIP1 regulates the localization during mitosis of the BBSome, a ciliary protein complex involved in cilium biogenesis. Regulates DNA repair during mitosis by mediating phosphorylation of POLQ and RHNO1, thereby promoting POLQ recruitment to DNA damage sites. Phosphorylates ATXN10 which may play a role in the regulation of cytokinesis and may stimulate the proteasome-mediated degradation of ATXN10. The polypeptide is Serine/threonine-protein kinase PLK1 (Plk1) (Mus musculus (Mouse)).